The following is a 75-amino-acid chain: Protease B inhibitor 2 (75 aa).

Threonine 74 carries the post-translational modification Phosphothreonine.

This sequence belongs to the protease inhibitor I9 family. As to quaternary structure, part of the heterodimeric LMA1 complex together with the thioredoxin II/TRX2. LMA1 binds to the ATPase SEC18.

It is found in the cytoplasm. Functionally, cytosolic inhibitor of vacuolar proteinase B (yscB), probably regulating protease B activity during limited proteolysis. PBI2 is a component of the LMA1 complex, which is involved in the facilitation of vesicle fusion such as homotypic vacuole and ER-derived COPII vesicle fusion with the Golgi. In Saccharomyces cerevisiae (strain ATCC 204508 / S288c) (Baker's yeast), this protein is Protease B inhibitor 2 (PBI2).